Reading from the N-terminus, the 334-residue chain is Uracil-DNA glycosylase (334 aa).

Residues 1-17 (MKRACSRSPSPRRRPSS) show a composition bias toward basic residues. 2 disordered regions span residues 1–63 (MKRA…CRSS) and 79–104 (VTFS…AATS). Residues 40-50 (GASNDASTETR) are compositionally biased toward polar residues. Residue Asp178 is the Proton acceptor of the active site.

It belongs to the uracil-DNA glycosylase (UDG) superfamily. UNG family.

Its subcellular location is the host nucleus. The enzyme catalyses Hydrolyzes single-stranded DNA or mismatched double-stranded DNA and polynucleotides, releasing free uracil.. Excises uracil residues from the DNA which can arise as a result of misincorporation of dUMP residues by DNA polymerase or deamination of cytosines. Therefore may reduce deleterious uracil incorporation into the viral genome, particularly in terminally differentiated cells which lack DNA repair enzymes. The polypeptide is Uracil-DNA glycosylase (Human herpesvirus 1 (strain 17) (HHV-1)).